The primary structure comprises 295 residues: Elongation factor Ts (295 aa).

The segment at 79-82 is involved in Mg(2+) ion dislocation from EF-Tu; it reads TDFV.

Belongs to the EF-Ts family.

The protein resides in the cytoplasm. Functionally, associates with the EF-Tu.GDP complex and induces the exchange of GDP to GTP. It remains bound to the aminoacyl-tRNA.EF-Tu.GTP complex up to the GTP hydrolysis stage on the ribosome. In Bacillus cereus (strain G9842), this protein is Elongation factor Ts.